We begin with the raw amino-acid sequence, 238 residues long: Ion-translocating oxidoreductase complex subunit E (238 aa).

The next 6 membrane-spanning stretches (helical) occupy residues 20–40, 41–61, 72–92, 95–115, 130–150, and 185–205; these read ALVQ…VVNA, LGLG…VSLI, PAFV…MKAF, ELYQ…AVLG, AVDG…VGAV, and NVIF…LIAA.

It belongs to the NqrDE/RnfAE family. The complex is composed of six subunits: RnfA, RnfB, RnfC, RnfD, RnfE and RnfG.

Its subcellular location is the cell inner membrane. In terms of biological role, part of a membrane-bound complex that couples electron transfer with translocation of ions across the membrane. The protein is Ion-translocating oxidoreductase complex subunit E of Cellvibrio japonicus (strain Ueda107) (Pseudomonas fluorescens subsp. cellulosa).